Consider the following 110-residue polypeptide: Evasin P1166 (110 aa).

Positions 1 to 24 (MEVKIFTLLQIALFIALGIHLVVA) are cleaved as a signal peptide. Disulfide bonds link cysteine 45–cysteine 67, cysteine 49–cysteine 69, and cysteine 60–cysteine 80. Asparagine 48 is a glycosylation site (N-linked (GlcNAc...) asparagine). The segment at 89 to 110 (SEYPNPKSSEIDAAAPLPRETH) is disordered.

It is found in the secreted. Its function is as follows. Salivary chemokine-binding protein which binds to host chemokines CXCL1, CXCL2 and CXCL8. In Ixodes ricinus (Common tick), this protein is Evasin P1166.